The chain runs to 441 residues: Trigger factor (441 aa).

The region spanning 161-246 (GDKVTIDFLG…VHEVLGEKLP (86 aa)) is the PPIase FKBP-type domain.

Belongs to the FKBP-type PPIase family. Tig subfamily.

The protein localises to the cytoplasm. The catalysed reaction is [protein]-peptidylproline (omega=180) = [protein]-peptidylproline (omega=0). Functionally, involved in protein export. Acts as a chaperone by maintaining the newly synthesized protein in an open conformation. Functions as a peptidyl-prolyl cis-trans isomerase. The polypeptide is Trigger factor (Teredinibacter turnerae (strain ATCC 39867 / T7901)).